The primary structure comprises 152 residues: MRLIAVGRMKDRVERDLFQRYAERLSPRLDLVEVAEGRGAPAEIKRREGQALLSALPDRAFAVALDEGGRAHDSLAFARVLERWLGLSRPVCFLVGGAEGLDGPVLARADDTLSLGPMTWPHMLIRGLLAEQLYRARAIASGHPYHRAGRPA.

S-adenosyl-L-methionine contacts are provided by residues L65, G96, and 115-120 (LGPMTW).

This sequence belongs to the RNA methyltransferase RlmH family. Homodimer.

It is found in the cytoplasm. The catalysed reaction is pseudouridine(1915) in 23S rRNA + S-adenosyl-L-methionine = N(3)-methylpseudouridine(1915) in 23S rRNA + S-adenosyl-L-homocysteine + H(+). In terms of biological role, specifically methylates the pseudouridine at position 1915 (m3Psi1915) in 23S rRNA. The polypeptide is Ribosomal RNA large subunit methyltransferase H (Gluconacetobacter diazotrophicus (strain ATCC 49037 / DSM 5601 / CCUG 37298 / CIP 103539 / LMG 7603 / PAl5)).